The chain runs to 81 residues: Small ribosomal subunit protein bS16 (81 aa).

The protein belongs to the bacterial ribosomal protein bS16 family.

This chain is Small ribosomal subunit protein bS16, found in Alkaliphilus oremlandii (strain OhILAs) (Clostridium oremlandii (strain OhILAs)).